The sequence spans 276 residues: 2-dehydro-3-deoxyphosphooctonate aldolase (276 aa).

Belongs to the KdsA family.

The protein resides in the cytoplasm. It carries out the reaction D-arabinose 5-phosphate + phosphoenolpyruvate + H2O = 3-deoxy-alpha-D-manno-2-octulosonate-8-phosphate + phosphate. Its pathway is carbohydrate biosynthesis; 3-deoxy-D-manno-octulosonate biosynthesis; 3-deoxy-D-manno-octulosonate from D-ribulose 5-phosphate: step 2/3. The protein operates within bacterial outer membrane biogenesis; lipopolysaccharide biosynthesis. This is 2-dehydro-3-deoxyphosphooctonate aldolase from Xanthomonas euvesicatoria pv. vesicatoria (strain 85-10) (Xanthomonas campestris pv. vesicatoria).